The chain runs to 311 residues: 4-diphosphocytidyl-2-C-methyl-D-erythritol kinase (311 aa).

Lysine 16 is an active-site residue. Residue 101 to 111 (PVAGGMAGGSA) participates in ATP binding. Aspartate 143 is a catalytic residue.

This sequence belongs to the GHMP kinase family. IspE subfamily.

It catalyses the reaction 4-CDP-2-C-methyl-D-erythritol + ATP = 4-CDP-2-C-methyl-D-erythritol 2-phosphate + ADP + H(+). It functions in the pathway isoprenoid biosynthesis; isopentenyl diphosphate biosynthesis via DXP pathway; isopentenyl diphosphate from 1-deoxy-D-xylulose 5-phosphate: step 3/6. In terms of biological role, catalyzes the phosphorylation of the position 2 hydroxy group of 4-diphosphocytidyl-2C-methyl-D-erythritol. The sequence is that of 4-diphosphocytidyl-2-C-methyl-D-erythritol kinase from Rhodococcus jostii (strain RHA1).